The sequence spans 143 residues: CSAVAVRTLRPLSLSARAACSSEDKITVHFINRDGDKLTAKGKPGDSLLDVVVENNLDIDGFGACEGTLACSTCHLIFEDHIFEKLDAITDEEMDMLDLAYGLTETSRLGCQICLKKSMDNMTVRVPEAVADARQSVDLSKNS.

Residues 1 to 19 constitute a mitochondrion transit peptide; the sequence is CSAVAVRTLRPLSLSARAA. The region spanning 26-130 is the 2Fe-2S ferredoxin-type domain; sequence ITVHFINRDG…NMTVRVPEAV (105 aa). The [2Fe-2S] cluster site is built by cysteine 65, cysteine 71, cysteine 74, and cysteine 111.

It belongs to the adrenodoxin/putidaredoxin family. The cofactor is [2Fe-2S] cluster.

Its subcellular location is the mitochondrion matrix. Its function is as follows. Essential for the synthesis of various steroid hormones. Participates in the reduction of mitochondrial cytochrome P450 for steroidogenesis. Transfers electrons from adrenodoxin reductase to CYP11A1, a cytochrome P450 that catalyzes cholesterol side-chain cleavage. Does not form a ternary complex with adrenodoxin reductase and CYP11A1 but shuttles between the two enzymes to transfer electrons. This Gallus gallus (Chicken) protein is Adrenodoxin, mitochondrial (FDX1).